The sequence spans 256 residues: 14-3-3-like protein GF14-C (256 aa).

Belongs to the 14-3-3 family. As to quaternary structure, may form a complex with the transcriptional activator VP1 and the bZIP transcription factor EMBP1. In terms of tissue distribution, expressed in seedlings, internodes and panicles.

It localises to the cytoplasm. It is found in the nucleus. Its function is as follows. Is associated with a DNA binding complex that binds to the G box, a well-characterized cis-acting DNA regulatory element found in plant genes. The polypeptide is 14-3-3-like protein GF14-C (GF14C) (Oryza sativa subsp. japonica (Rice)).